The sequence spans 477 residues: V-type ATP synthase beta chain (477 aa).

Belongs to the ATPase alpha/beta chains family.

Its function is as follows. Produces ATP from ADP in the presence of a proton gradient across the membrane. The V-type beta chain is a regulatory subunit. The protein is V-type ATP synthase beta chain of Anaeromyxobacter dehalogenans (strain 2CP-1 / ATCC BAA-258).